Consider the following 26-residue polypeptide: Aldehyde dehydrogenase beta chain (26 aa).

Heterotrimer composed of an alpha, a beta and a gamma chain. Requires FAD as cofactor.

The catalysed reaction is an aldehyde + a quinone + H2O = a quinol + a carboxylate + H(+). The protein is Aldehyde dehydrogenase beta chain of Amycolatopsis methanolica.